A 436-amino-acid chain; its full sequence is Protein translocase subunit SecY (436 aa).

10 consecutive transmembrane segments (helical) span residues 19 to 39 (ILFTIFIILVFRIGTTITVPG), 68 to 88 (FSVFALGVSPYITASIVVQLL), 116 to 136 (YISLALAFVQSIGITAGFNAL), 151 to 171 (LFIGAVLTTGSMIVVWLGEQI), 179 to 199 (GVSMIIFAGIVASIPEMVKGI), 216 to 236 (IIFVACLIVAVLLIVYFTTYV), 269 to 289 (VIPVIFASSITAAPAAVLQFL), 313 to 333 (GIAMYALLIILFTFFYTFVQI), 372 to 392 (VGSLFLGFISIIPIIAKDLFG), and 395 to 415 (DTVALGGTSLLIIIATGIEGM).

It belongs to the SecY/SEC61-alpha family. In terms of assembly, component of the Sec protein translocase complex. Heterotrimer consisting of SecY, SecE and SecG subunits. The heterotrimers can form oligomers, although 1 heterotrimer is thought to be able to translocate proteins. Interacts with the ribosome. Interacts with SecDF, and other proteins may be involved. Interacts with SecA.

It localises to the cell membrane. In terms of biological role, the central subunit of the protein translocation channel SecYEG. Consists of two halves formed by TMs 1-5 and 6-10. These two domains form a lateral gate at the front which open onto the bilayer between TMs 2 and 7, and are clamped together by SecE at the back. The channel is closed by both a pore ring composed of hydrophobic SecY resides and a short helix (helix 2A) on the extracellular side of the membrane which forms a plug. The plug probably moves laterally to allow the channel to open. The ring and the pore may move independently. The sequence is that of Protein translocase subunit SecY from Streptococcus gordonii (strain Challis / ATCC 35105 / BCRC 15272 / CH1 / DL1 / V288).